Consider the following 25-residue polypeptide: Retinol-binding protein 3 (25 aa).

Its subcellular location is the secreted. The protein resides in the extracellular space. It localises to the extracellular matrix. It is found in the interphotoreceptor matrix. Functionally, IRBP shuttles 11-cis and all trans retinoids between the retinol isomerase in the pigment epithelium and the visual pigments in the photoreceptor cells of the retina. This is Retinol-binding protein 3 (RBP3) from Sus scrofa (Pig).